We begin with the raw amino-acid sequence, 495 residues long: Surface E' protein (495 aa).

Residues Gly224–Val235 traverse the membrane as a helical segment.

Its subcellular location is the cell membrane. The protein is Surface E' protein (cbbE') of Coxiella burnetii.